Consider the following 130-residue polypeptide: S-adenosylmethionine decarboxylase proenzyme (130 aa).

Ser-63 acts as the Schiff-base intermediate with substrate; via pyruvic acid in catalysis. At Ser-63 the chain carries Pyruvic acid (Ser); by autocatalysis. The active-site Proton acceptor; for processing activity is His-68. The active-site Proton donor; for catalytic activity is the Cys-83.

This sequence belongs to the prokaryotic AdoMetDC family. Type 1 subfamily. As to quaternary structure, heterotetramer of two alpha and two beta chains arranged as a dimer of alpha/beta heterodimers. Pyruvate serves as cofactor. Post-translationally, is synthesized initially as an inactive proenzyme. Formation of the active enzyme involves a self-maturation process in which the active site pyruvoyl group is generated from an internal serine residue via an autocatalytic post-translational modification. Two non-identical subunits are generated from the proenzyme in this reaction, and the pyruvate is formed at the N-terminus of the alpha chain, which is derived from the carboxyl end of the proenzyme. The post-translation cleavage follows an unusual pathway, termed non-hydrolytic serinolysis, in which the side chain hydroxyl group of the serine supplies its oxygen atom to form the C-terminus of the beta chain, while the remainder of the serine residue undergoes an oxidative deamination to produce ammonia and the pyruvoyl group blocking the N-terminus of the alpha chain.

The enzyme catalyses S-adenosyl-L-methionine + H(+) = S-adenosyl 3-(methylsulfanyl)propylamine + CO2. The protein operates within amine and polyamine biosynthesis; S-adenosylmethioninamine biosynthesis; S-adenosylmethioninamine from S-adenosyl-L-methionine: step 1/1. Catalyzes the decarboxylation of S-adenosylmethionine to S-adenosylmethioninamine (dcAdoMet), the propylamine donor required for the synthesis of the polyamines spermine and spermidine from the diamine putrescine. This Thermosipho melanesiensis (strain DSM 12029 / CIP 104789 / BI429) protein is S-adenosylmethionine decarboxylase proenzyme.